The primary structure comprises 659 residues: Protein SCARECROW 1 (659 aa).

2 disordered regions span residues methionine 1 to leucine 33 and serine 188 to aspartate 285. Residues proline 190–glutamine 228 are compositionally biased toward pro residues. The span at alanine 258 to alanine 271 shows a compositional bias: low complexity. The stretch at alanine 258 to leucine 289 forms a coiled coil. Residues alanine 272–aspartate 285 show a composition bias toward basic and acidic residues. The GRAS domain maps to lysine 282 to arginine 652. Positions leucine 289–proline 353 are leucine repeat I (LRI). The LxCxE motif signature appears at leucine 296–glutamate 300. The segment at phenylalanine 372–glycine 437 is VHIID. The short motif at valine 403–aspartate 407 is the VHIID element. Positions alanine 447–lysine 479 are leucine repeat II (LRII). A PFYRE region spans residues valine 488–asparagine 575. Residues alanine 578–arginine 652 are SAW.

This sequence belongs to the GRAS family. In terms of assembly, interacts with SHR1, but not with SHR2.

The protein resides in the nucleus. Transcription factor required for quiescent center cells specification and maintenance of surrounding stem cells, and for the asymmetric cell division involved in radial pattern formation in roots. Essential for cell division but not differentiation of the ground tissue. Regulates the radial organization of the shoot axial organs. Restricts SHR movment and sequesters it into the nucleus of the endodermis. The protein is Protein SCARECROW 1 (SCR1) of Oryza sativa subsp. indica (Rice).